The chain runs to 401 residues: Argininosuccinate synthase (401 aa).

Residues 10–18 (AYSGGVDTS) and alanine 38 each bind ATP. Residue tyrosine 89 coordinates L-citrulline. Glycine 119 lines the ATP pocket. 3 residues coordinate L-aspartate: threonine 121, asparagine 125, and aspartate 126. An L-citrulline-binding site is contributed by asparagine 125. Positions 129, 177, 186, 262, and 274 each coordinate L-citrulline.

Belongs to the argininosuccinate synthase family. Type 1 subfamily. As to quaternary structure, homotetramer.

It localises to the cytoplasm. The catalysed reaction is L-citrulline + L-aspartate + ATP = 2-(N(omega)-L-arginino)succinate + AMP + diphosphate + H(+). Its pathway is amino-acid biosynthesis; L-arginine biosynthesis; L-arginine from L-ornithine and carbamoyl phosphate: step 2/3. The polypeptide is Argininosuccinate synthase (Synechococcus sp. (strain CC9311)).